Here is a 303-residue protein sequence, read N- to C-terminus: Glutamyl-Q tRNA(Asp) synthetase (303 aa).

L-glutamate contacts are provided by residues 16-20 and glutamate 52; that span reads RFAPS. The short motif at 19–29 is the 'HIGH' region element; that stretch reads PSPSGPLHFGS. Positions 108, 110, 122, and 126 each coordinate Zn(2+). Tyrosine 177 and arginine 195 together coordinate L-glutamate. A 'KMSKS' region motif is present at residues 233–237; it reads KLSKQ. Lysine 236 contacts ATP.

This sequence belongs to the class-I aminoacyl-tRNA synthetase family. GluQ subfamily. It depends on Zn(2+) as a cofactor.

Its function is as follows. Catalyzes the tRNA-independent activation of glutamate in presence of ATP and the subsequent transfer of glutamate onto a tRNA(Asp). Glutamate is transferred on the 2-amino-5-(4,5-dihydroxy-2-cyclopenten-1-yl) moiety of the queuosine in the wobble position of the QUC anticodon. The polypeptide is Glutamyl-Q tRNA(Asp) synthetase (Vibrio vulnificus (strain CMCP6)).